Here is a 255-residue protein sequence, read N- to C-terminus: Large ribosomal subunit protein uL6m (255 aa).

A disordered region spans residues 39 to 61; that stretch reads AARRNFSATTTRPSKLGRTPLSI.

Belongs to the universal ribosomal protein uL6 family. In terms of assembly, component of the mitochondrial large ribosomal subunit (mt-LSU). Mature N.crassa 74S mitochondrial ribosomes consist of a small (37S) and a large (54S) subunit. The 37S small subunit contains a 16S ribosomal RNA (16S mt-rRNA) and 32 different proteins. The 54S large subunit contains a 23S rRNA (23S mt-rRNA) and 42 different proteins.

It localises to the mitochondrion. Functionally, component of the mitochondrial ribosome (mitoribosome), a dedicated translation machinery responsible for the synthesis of mitochondrial genome-encoded proteins, including at least some of the essential transmembrane subunits of the mitochondrial respiratory chain. The mitoribosomes are attached to the mitochondrial inner membrane and translation products are cotranslationally integrated into the membrane. This is Large ribosomal subunit protein uL6m (mrpl6) from Neurospora crassa (strain ATCC 24698 / 74-OR23-1A / CBS 708.71 / DSM 1257 / FGSC 987).